The chain runs to 339 residues: UDP-N-acetylenolpyruvoylglucosamine reductase (339 aa).

An FAD-binding PCMH-type domain is found at 19–189 (VDVQARLFAQ…LRVRFKLSRE (171 aa)). Residue arginine 166 is part of the active site. The Proton donor role is filled by serine 239. Residue glutamate 335 is part of the active site.

This sequence belongs to the MurB family. FAD serves as cofactor.

The protein resides in the cytoplasm. It carries out the reaction UDP-N-acetyl-alpha-D-muramate + NADP(+) = UDP-N-acetyl-3-O-(1-carboxyvinyl)-alpha-D-glucosamine + NADPH + H(+). It functions in the pathway cell wall biogenesis; peptidoglycan biosynthesis. In terms of biological role, cell wall formation. This Pseudomonas syringae pv. tomato (strain ATCC BAA-871 / DC3000) protein is UDP-N-acetylenolpyruvoylglucosamine reductase.